A 223-amino-acid chain; its full sequence is Deoxyribose-phosphate aldolase (223 aa).

Residue D89 is the Proton donor/acceptor of the active site. Residue K152 is the Schiff-base intermediate with acetaldehyde of the active site. The active-site Proton donor/acceptor is K181.

This sequence belongs to the DeoC/FbaB aldolase family. DeoC type 1 subfamily.

It localises to the cytoplasm. It carries out the reaction 2-deoxy-D-ribose 5-phosphate = D-glyceraldehyde 3-phosphate + acetaldehyde. It functions in the pathway carbohydrate degradation; 2-deoxy-D-ribose 1-phosphate degradation; D-glyceraldehyde 3-phosphate and acetaldehyde from 2-deoxy-alpha-D-ribose 1-phosphate: step 2/2. Functionally, catalyzes a reversible aldol reaction between acetaldehyde and D-glyceraldehyde 3-phosphate to generate 2-deoxy-D-ribose 5-phosphate. In Bacillus cytotoxicus (strain DSM 22905 / CIP 110041 / 391-98 / NVH 391-98), this protein is Deoxyribose-phosphate aldolase.